The chain runs to 138 residues: MRALWIVAVLLVGVEGNLLQFNKMIKFETNKNAIPFYAFYGCYCGWGGRGRPKDATDRCCFVHDCCYGKLPNCDTKWDIYSYSLKSGFITCGKGTWCEEQICECDRVAAECLRRSLSTYKYGYMFYLDSRCKGPSEQC.

Residues 1-16 form the signal peptide; the sequence is MRALWIVAVLLVGVEG. Cystine bridges form between Cys-42–Cys-131, Cys-44–Cys-60, Cys-59–Cys-111, Cys-65–Cys-138, Cys-66–Cys-104, Cys-73–Cys-97, and Cys-91–Cys-102. The Ca(2+) site is built by Tyr-43, Gly-45, and Gly-47. Residue His-63 is part of the active site. Ca(2+) is bound at residue Asp-64. Residue Asp-105 is part of the active site.

As to quaternary structure, heterodimer of an acidic subunit and a basic chain. The acidic subunit is non-toxic, without enzymatic activity and comprises 3 peptides that are cross-linked by 7 disulfide bridges. The basic subunit is toxic, has phospholipase A2 activity and is composed of a single chain. Ca(2+) is required as a cofactor. As to expression, expressed by the venom gland.

The protein resides in the secreted. The enzyme catalyses a 1,2-diacyl-sn-glycero-3-phosphocholine + H2O = a 1-acyl-sn-glycero-3-phosphocholine + a fatty acid + H(+). Functionally, snake venom phospholipase A2 (PLA2) that shows presynaptic neurotoxicity. PLA2 catalyzes the calcium-dependent hydrolysis of the 2-acyl groups in 3-sn-phosphoglycerides. In Sistrurus tergeminus (Western massasauga), this protein is Basic phospholipase A2 sistruxin B.